Reading from the N-terminus, the 1121-residue chain is Myelin transcription factor 1 (1121 aa).

Disordered stretches follow at residues 1-156 (MSLE…SKGS) and 200-376 (EAAE…MTRG). The CCHHC-type 1 zinc finger occupies 21–64 (PETTAADLSCPTPGCTGSGHVRGKYSRHRSLQSCPLAKKRKLEG). Residues cysteine 30, cysteine 35, histidine 48, and cysteine 54 each contribute to the Zn(2+) site. Positions 41–50 (VRGKYSRHRS) are enriched in basic residues. Basic and acidic residues-rich tracts occupy residues 62 to 71 (LEGAEAEHLV) and 123 to 132 (DEIHRPETAE). Residues 147–156 (GSATASSKGS) are compositionally biased toward low complexity. Residues 258–308 (EEEDEEEEEEEEEEEEDEEEEEEEEEEEEEEEEEEEEEEEEEEEEEEEEAA) show a composition bias toward acidic residues. Residues 346–358 (VRSDDDKDEDTHS) show a composition bias toward basic and acidic residues. 2 consecutive CCHHC-type zinc fingers follow at residues 433–476 (SRAE…PPEI) and 477–520 (LAMH…KLAK). The Zn(2+) site is built by cysteine 442, cysteine 447, histidine 460, cysteine 466, cysteine 486, cysteine 491, histidine 504, and cysteine 510. Disordered regions lie at residues 517–540 (KLAK…SNSD) and 668–774 (TLDL…EERK). Polar residues predominate over residues 526-540 (QPQTGDPSKSSSNSD). A compositionally biased stretch (low complexity) spans 705 to 723 (SSTSAPSSSMTSPQSSQAS). Basic and acidic residues predominate over residues 724–733 (RQDEWDRPLD). The span at 759–770 (EADDQEVSEENF) shows a compositional bias: acidic residues. CCHHC-type zinc fingers lie at residues 791–834 (KDIK…LRNL), 835–878 (MAAH…GVKV), 884–927 (DKED…QKEG), and 937–980 (KSLK…GKKG). Residues cysteine 800, cysteine 805, histidine 818, cysteine 824, cysteine 844, cysteine 849, histidine 862, cysteine 868, cysteine 893, cysteine 898, histidine 911, cysteine 917, cysteine 946, cysteine 951, histidine 964, and cysteine 970 each contribute to the Zn(2+) site.

This sequence belongs to the MYT1 family. Interacts with STEAP3. In terms of tissue distribution, mostly in developing nervous system. Expressed in neural progenitors and oligodendrocyte lineage cells. More highly expressed in oligodendrocyte progenitors than in differentiated oligodendrocytes.

Its subcellular location is the nucleus. Functionally, binds to the promoter region of genes encoding proteolipid proteins of the central nervous system. May play a role in the development of neurons and oligodendroglia in the CNS. May regulate a critical transition point in oligodendrocyte lineage development by modulating oligodendrocyte progenitor proliferation relative to terminal differentiation and up-regulation of myelin gene transcription. This Homo sapiens (Human) protein is Myelin transcription factor 1 (MYT1).